A 507-amino-acid polypeptide reads, in one-letter code: Kunitz-type protease inhibitor 1 (507 aa).

Residues 1–29 (MAGRRLARASISAVGVWLLCALGLQATEA) form the signal peptide. The 84-residue stretch at 51–134 (GVPSFVLDTE…FAPKEGFINY (84 aa)) folds into the MANSC domain. N229 carries N-linked (GlcNAc...) asparagine glycosylation. Residues 244-294 (CLASYKVGRCRGSFPRWYYDPKEQICKSFTFGGCLGNKNNYLREEECMLAC) enclose the BPTI/Kunitz inhibitor 1 domain. 8 disulfide bridges follow: C244/C294, C253/C277, C269/C290, C320/C338, C332/C347, C369/C419, C378/C402, and C394/C415. The 37-residue stretch at 312–348 (SCHATQFRCSNGCCIDGFLECDDTPDCPDGSDEATCE) folds into the LDL-receptor class A domain. One can recognise a BPTI/Kunitz inhibitor 2 domain in the interval 369–419 (CAELPDTGFCKENIPRWYYNPFSERCARFTYGGCYGNKNNFEEEQQCLESC). N501 is a glycosylation site (N-linked (GlcNAc...) asparagine).

As to quaternary structure, interacts with HGFAC. Interacts with TMPRSS13; the interaction promotes the phosphorylation and cell membrane localization of TMPRSS13.

Its subcellular location is the secreted. The protein localises to the cytoplasm. It localises to the cell membrane. Inhibitor of HGFAC. Inhibits serine protease activity of ST14/matriptase in vitro. Inhibits serine protease activity of TMPRSS13, via the BPTI/Kunitz inhibitor 1 domain. This Mus musculus (Mouse) protein is Kunitz-type protease inhibitor 1 (Spint1).